A 230-amino-acid polypeptide reads, in one-letter code: Urease accessory protein UreF (230 aa).

It belongs to the UreF family. UreD, UreF and UreG form a complex that acts as a GTP-hydrolysis-dependent molecular chaperone, activating the urease apoprotein by helping to assemble the nickel containing metallocenter of UreC. The UreE protein probably delivers the nickel.

The protein localises to the cytoplasm. Functionally, required for maturation of urease via the functional incorporation of the urease nickel metallocenter. The sequence is that of Urease accessory protein UreF from Cupriavidus metallidurans (strain ATCC 43123 / DSM 2839 / NBRC 102507 / CH34) (Ralstonia metallidurans).